A 257-amino-acid chain; its full sequence is 3-methyl-2-oxobutanoate hydroxymethyltransferase (257 aa).

Positions 42 and 86 each coordinate Mg(2+). Residues 42-43 (DS), Asp-86, and Lys-116 each bind 3-methyl-2-oxobutanoate. Glu-118 contacts Mg(2+). The Proton acceptor role is filled by Glu-185.

Belongs to the PanB family. In terms of assembly, homodecamer; pentamer of dimers. Requires Mg(2+) as cofactor.

Its subcellular location is the cytoplasm. The enzyme catalyses 3-methyl-2-oxobutanoate + (6R)-5,10-methylene-5,6,7,8-tetrahydrofolate + H2O = 2-dehydropantoate + (6S)-5,6,7,8-tetrahydrofolate. Its pathway is cofactor biosynthesis; (R)-pantothenate biosynthesis; (R)-pantoate from 3-methyl-2-oxobutanoate: step 1/2. Functionally, catalyzes the reversible reaction in which hydroxymethyl group from 5,10-methylenetetrahydrofolate is transferred onto alpha-ketoisovalerate to form ketopantoate. The chain is 3-methyl-2-oxobutanoate hydroxymethyltransferase from Prochlorococcus marinus (strain MIT 9301).